Reading from the N-terminus, the 598-residue chain is Chaperone protein DnaK (598 aa).

The residue at position 180 (threonine 180) is a Phosphothreonine; by autocatalysis.

Belongs to the heat shock protein 70 family.

Acts as a chaperone. This chain is Chaperone protein DnaK, found in Thermosipho africanus (strain TCF52B).